Consider the following 289-residue polypeptide: Glucosamine-6-phosphate deaminase 1 (289 aa).

K64 is subject to N6-acetyllysine. The active-site Proton acceptor; for enolization step is D72. Catalysis depends on D141, which acts as the For ring-opening step. Residue H143 is the Proton acceptor; for ring-opening step of the active site. The active-site For ring-opening step is the E148. T161 is modified (phosphothreonine).

It belongs to the glucosamine/galactosamine-6-phosphate isomerase family. Homohexamer.

It is found in the cytoplasm. It catalyses the reaction alpha-D-glucosamine 6-phosphate + H2O = beta-D-fructose 6-phosphate + NH4(+). The protein operates within nucleotide-sugar biosynthesis; UDP-N-acetyl-alpha-D-glucosamine biosynthesis; alpha-D-glucosamine 6-phosphate from D-fructose 6-phosphate: step 1/1. Allosterically activated by N-acetylglucosamine-6-phosphate (GlcNAc6P). In terms of biological role, catalyzes the reversible conversion of alpha-D-glucosamine 6-phosphate (GlcN-6P) into beta-D-fructose 6-phosphate (Fru-6P) and ammonium ion, a regulatory reaction step in de novo uridine diphosphate-N-acetyl-alpha-D-glucosamine (UDP-GlcNAc) biosynthesis via hexosamine pathway. Deamination is coupled to aldo-keto isomerization mediating the metabolic flux from UDP-GlcNAc toward Fru-6P. At high ammonium level can drive amination and isomerization of Fru-6P toward hexosamines and UDP-GlcNAc synthesis. Has a role in fine tuning the metabolic fluctuations of cytosolic UDP-GlcNAc and their effects on hyaluronan synthesis that occur during tissue remodeling. Seems to trigger calcium oscillations in mammalian eggs. These oscillations serve as the essential trigger for egg activation and early development of the embryo. The chain is Glucosamine-6-phosphate deaminase 1 from Pongo abelii (Sumatran orangutan).